A 288-amino-acid chain; its full sequence is 4-diphosphocytidyl-2-C-methyl-D-erythritol kinase (288 aa).

Residue Lys-8 is part of the active site. 90–100 (PVGAGLAGGSS) is a binding site for ATP. Asp-132 is an active-site residue.

Belongs to the GHMP kinase family. IspE subfamily.

It carries out the reaction 4-CDP-2-C-methyl-D-erythritol + ATP = 4-CDP-2-C-methyl-D-erythritol 2-phosphate + ADP + H(+). Its pathway is isoprenoid biosynthesis; isopentenyl diphosphate biosynthesis via DXP pathway; isopentenyl diphosphate from 1-deoxy-D-xylulose 5-phosphate: step 3/6. Catalyzes the phosphorylation of the position 2 hydroxy group of 4-diphosphocytidyl-2C-methyl-D-erythritol. This Chlamydia trachomatis serovar D (strain ATCC VR-885 / DSM 19411 / UW-3/Cx) protein is 4-diphosphocytidyl-2-C-methyl-D-erythritol kinase.